The following is a 355-amino-acid chain: MKKIKVLIVDDSAVVRQTMADILASDPHIEVMAPAADPFIAAERMREQVPDVITLDVEMPRMDGITFLKKIMSQHPIPVVMCSTLTESGSETAVKALEYGAVEIIQKPKLGTKQFLEESRVRICDAVKAASQARLRKITPRTGKEIAPKLSADVILEKPGSKAMIQTTEKVVVVGASTGGTEALRVFLEALPADSPPIVIVQHMPEGFTRAFAQRLDGICRITVKEAADNDTVMRGRALIAPGNRHTLLKRSGARYYVEIKDGPLVSRHRPSVDVLFRSAARYAGKNAVGVIMTGMGDDGASGMKEMRDAGAVTIAQDEATCIVFGMPNEAIKRGGADRVIPLDTIAREVLRLCG.

One can recognise a Response regulatory domain in the interval 5–122 (KVLIVDDSAV…KQFLEESRVR (118 aa)). Residue Asp-56 is modified to 4-aspartylphosphate. The CheB-type methylesterase domain maps to 165 to 355 (IQTTEKVVVV…IAREVLRLCG (191 aa)). Active-site residues include Ser-177, His-203, and Asp-299.

It belongs to the CheB family. Post-translationally, phosphorylated by CheA. Phosphorylation of the N-terminal regulatory domain activates the methylesterase activity.

The protein localises to the cytoplasm. The enzyme catalyses [protein]-L-glutamate 5-O-methyl ester + H2O = L-glutamyl-[protein] + methanol + H(+). The catalysed reaction is L-glutaminyl-[protein] + H2O = L-glutamyl-[protein] + NH4(+). Functionally, involved in chemotaxis. Part of a chemotaxis signal transduction system that modulates chemotaxis in response to various stimuli. Catalyzes the demethylation of specific methylglutamate residues introduced into the chemoreceptors (methyl-accepting chemotaxis proteins or MCP) by CheR. Also mediates the irreversible deamidation of specific glutamine residues to glutamic acid. The chain is Protein-glutamate methylesterase/protein-glutamine glutaminase 3 from Geobacter metallireducens (strain ATCC 53774 / DSM 7210 / GS-15).